The sequence spans 101 residues: Replication restart protein PriB (101 aa).

Positions 1–101 (MTTNNLVLAG…LHAENVELKT (101 aa)) constitute an SSB domain.

This sequence belongs to the PriB family. In terms of assembly, homodimer. Interacts with PriA and DnaT. Component of the replication restart primosome. Primosome assembly occurs via a 'hand-off' mechanism. PriA binds to replication forks, subsequently PriB then DnaT bind; DnaT then displaces ssDNA to generate the helicase loading substrate.

Involved in the restart of stalled replication forks, which reloads the replicative helicase on sites other than the origin of replication; the PriA-PriB pathway is the major replication restart pathway. During primosome assembly it facilitates complex formation between PriA and DnaT on DNA; stabilizes PriA on DNA. Stimulates the DNA unwinding activity of PriA helicase. The sequence is that of Replication restart protein PriB from Shewanella halifaxensis (strain HAW-EB4).